Consider the following 207-residue polypeptide: Large ribosomal subunit protein uL3 (207 aa).

The protein belongs to the universal ribosomal protein uL3 family. In terms of assembly, part of the 50S ribosomal subunit. Forms a cluster with proteins L14 and L19.

Functionally, one of the primary rRNA binding proteins, it binds directly near the 3'-end of the 23S rRNA, where it nucleates assembly of the 50S subunit. The protein is Large ribosomal subunit protein uL3 of Thermotoga maritima (strain ATCC 43589 / DSM 3109 / JCM 10099 / NBRC 100826 / MSB8).